We begin with the raw amino-acid sequence, 801 residues long: Phenylalanine--tRNA ligase beta subunit (801 aa).

In terms of domain architecture, tRNA-binding spans 39–152 (ARAFSGVVVG…TDAPIGTDIR (114 aa)). A B5 domain is found at 407–482 (PARAPITLPI…RIYGYDNIPS (76 aa)). Positions 460, 466, 469, and 470 each coordinate Mg(2+). Positions 706 to 799 (SKFPQVRRDI…LTVEHSAQLR (94 aa)) constitute an FDX-ACB domain.

Belongs to the phenylalanyl-tRNA synthetase beta subunit family. Type 1 subfamily. As to quaternary structure, tetramer of two alpha and two beta subunits. Mg(2+) serves as cofactor.

Its subcellular location is the cytoplasm. It catalyses the reaction tRNA(Phe) + L-phenylalanine + ATP = L-phenylalanyl-tRNA(Phe) + AMP + diphosphate + H(+). This chain is Phenylalanine--tRNA ligase beta subunit, found in Psychrobacter arcticus (strain DSM 17307 / VKM B-2377 / 273-4).